Consider the following 342-residue polypeptide: Ribosomal RNA small subunit methyltransferase C (342 aa).

This sequence belongs to the methyltransferase superfamily. RsmC family. As to quaternary structure, monomer.

The protein resides in the cytoplasm. It carries out the reaction guanosine(1207) in 16S rRNA + S-adenosyl-L-methionine = N(2)-methylguanosine(1207) in 16S rRNA + S-adenosyl-L-homocysteine + H(+). In terms of biological role, specifically methylates the guanine in position 1207 of 16S rRNA in the 30S particle. This is Ribosomal RNA small subunit methyltransferase C from Shewanella sp. (strain MR-7).